Consider the following 521-residue polypeptide: Ribonuclease Y (521 aa).

Residues 3 to 23 (VSIWMLVITVLAAVAAYFAGS) traverse the membrane as a helical segment. A KH domain is found at 211–271 (TVSVVPLPSD…VRREVARMSL (61 aa)). An HD domain is found at 337 to 430 (IYQHSLEVAF…VQAADALSGA (94 aa)).

Belongs to the RNase Y family.

It is found in the cell membrane. Endoribonuclease that initiates mRNA decay. The protein is Ribonuclease Y of Pelobacter propionicus (strain DSM 2379 / NBRC 103807 / OttBd1).